A 756-amino-acid chain; its full sequence is Protease KEX1 (756 aa).

The first 24 residues, 1 to 24 (MILSSQLMLALIAVSGYGKAMQVP), serve as a signal peptide directing secretion. Asparagine 121, asparagine 144, and asparagine 152 each carry an N-linked (GlcNAc...) asparagine glycan. Residues 130-440 (QWHLINPNYP…FGKLDAYNIV (311 aa)) enclose the Peptidase S8 domain. Catalysis depends on charge relay system residues aspartate 164 and histidine 202. 2 disulfides stabilise this stretch: cysteine 218/cysteine 365 and cysteine 310/cysteine 340. Residue serine 373 is the Charge relay system of the active site. N-linked (GlcNAc...) asparagine glycans are attached at residues asparagine 392 and asparagine 538. The P/Homo B domain maps to 449-583 (VNPQGWLYLP…RLKMFGETID (135 aa)). The segment at 599–632 (AEVKSTESKTTTPTAQTSSFTTTSGEETSGANKL) is disordered. Residues 606–628 (SKTTTPTAQTSSFTTTSGEETSG) are compositionally biased toward low complexity. A helical membrane pass occupies residues 641–661 (LYLAIFVIGAIVIIIYYLFFL). A disordered region spans residues 715-756 (EEELSPRESSSNNPFGNESLESFDNSPDHTSNLLGQNSIPNK). Residues 721-756 (RESSSNNPFGNESLESFDNSPDHTSNLLGQNSIPNK) show a composition bias toward polar residues.

It belongs to the peptidase S8 family. Furin subfamily. Ca(2+) serves as cofactor.

It is found in the membrane. Probably involved in the processing of the precursor of m1-toxin and alpha-factor. This Kluyveromyces lactis (strain ATCC 8585 / CBS 2359 / DSM 70799 / NBRC 1267 / NRRL Y-1140 / WM37) (Yeast) protein is Protease KEX1 (KEX1).